A 527-amino-acid chain; its full sequence is Inosine-5'-monophosphate dehydrogenase (527 aa).

2 CBS domains span residues 121–183 and 184–240; these read FILD…VTAV and MSTD…PLAS. NAD(+) contacts are provided by residues 277 to 279 and 327 to 329; these read DSS and GMG. K(+) is bound by residues glycine 329 and glycine 331. Serine 332 serves as a coordination point for IMP. Cysteine 334 is a K(+) binding site. Cysteine 334 acts as the Thioimidate intermediate in catalysis. IMP-binding positions include 367-369 and 390-391; these read DGG and GS. The active-site Proton acceptor is the arginine 440. Glutamine 452 lines the IMP pocket. Residues 506–527 are disordered; the sequence is ASAQTEGNVHGLHSHEKKLYSS. Residues glutamate 511 and glycine 512 each contribute to the K(+) site. Basic and acidic residues predominate over residues 518 to 527; that stretch reads HSHEKKLYSS.

The protein belongs to the IMPDH/GMPR family. Homotetramer. The cofactor is K(+).

The protein resides in the cytoplasm. It catalyses the reaction IMP + NAD(+) + H2O = XMP + NADH + H(+). Its pathway is purine metabolism; XMP biosynthesis via de novo pathway; XMP from IMP: step 1/1. Mycophenolic acid (MPA) is a non-competitive inhibitor that prevents formation of the closed enzyme conformation by binding to the same site as the amobile flap. In contrast, mizoribine monophosphate (MZP) is a competitive inhibitor that induces the closed conformation. MPA is a potent inhibitor of mammalian IMPDHs but a poor inhibitor of the bacterial enzymes. MZP is a more potent inhibitor of bacterial IMPDH. Functionally, catalyzes the conversion of inosine 5'-phosphate (IMP) to xanthosine 5'-phosphate (XMP), the first committed and rate-limiting step in the de novo synthesis of guanine nucleotides, and therefore plays an important role in the regulation of cell growth. Part of the gene cluster that mediates the biosynthesis of mycophenolic acid (MPA), the first isolated antibiotic natural product in the world. Does not play a role in the biosynthesis of MPA, but is involved in self resistance to MPA, since MPA acts as an inhibitor of IMP dehydrogenases. The polypeptide is Inosine-5'-monophosphate dehydrogenase (Penicillium brevicompactum).